The chain runs to 618 residues: Carbamoyl phosphate synthase large chain, C-terminal section (618 aa).

An oligomerization domain region spans residues 1-78; it reads MDMEKLKEIL…ETFVYKEQDE (78 aa). Residues 79 to 477 form a carbamoyl phosphate synthetic domain region; the sequence is SNPSDRKKVI…YKAQLSANME (399 aa). An ATP-grasp domain is found at 208 to 399; that stretch reads SKLLKKLNIP…LAKLATKIML (192 aa). 10 residues coordinate ATP: arginine 244, lysine 283, leucine 285, glutamate 290, glycine 315, valine 316, histidine 317, serine 318, glutamine 358, and glutamate 370. Mg(2+)-binding residues include glutamine 358, glutamate 370, and asparagine 372. 3 residues coordinate Mn(2+): glutamine 358, glutamate 370, and asparagine 372. The 143-residue stretch at 476–618 folds into the MGS-like domain; it reads MELPIVGNVF…ELDARIKNRF (143 aa). Residues 478–618 form an allosteric domain region; sequence LPIVGNVFIS…ELDARIKNRF (141 aa).

This sequence belongs to the CarB family. Composed of two chains; the small (or glutamine) chain promotes the hydrolysis of glutamine to ammonia, which is used by the large (or ammonia) chain to synthesize carbamoyl phosphate. Tetramer of heterodimers (alpha,beta)4. Requires Mg(2+) as cofactor. The cofactor is Mn(2+).

The catalysed reaction is hydrogencarbonate + L-glutamine + 2 ATP + H2O = carbamoyl phosphate + L-glutamate + 2 ADP + phosphate + 2 H(+). It catalyses the reaction hydrogencarbonate + NH4(+) + 2 ATP = carbamoyl phosphate + 2 ADP + phosphate + 2 H(+). It functions in the pathway amino-acid biosynthesis; L-arginine biosynthesis; carbamoyl phosphate from bicarbonate: step 1/1. The protein operates within pyrimidine metabolism; UMP biosynthesis via de novo pathway; (S)-dihydroorotate from bicarbonate: step 1/3. In terms of biological role, large subunit of the glutamine-dependent carbamoyl phosphate synthetase (CPSase). CPSase catalyzes the formation of carbamoyl phosphate from the ammonia moiety of glutamine, carbonate, and phosphate donated by ATP, constituting the first step of 2 biosynthetic pathways, one leading to arginine and/or urea and the other to pyrimidine nucleotides. The large subunit (synthetase) binds the substrates ammonia (free or transferred from glutamine from the small subunit), hydrogencarbonate and ATP and carries out an ATP-coupled ligase reaction, activating hydrogencarbonate by forming carboxy phosphate which reacts with ammonia to form carbamoyl phosphate. This Methanocaldococcus jannaschii (strain ATCC 43067 / DSM 2661 / JAL-1 / JCM 10045 / NBRC 100440) (Methanococcus jannaschii) protein is Carbamoyl phosphate synthase large chain, C-terminal section (carB2).